We begin with the raw amino-acid sequence, 170 residues long: Adenine phosphoribosyltransferase (170 aa).

It belongs to the purine/pyrimidine phosphoribosyltransferase family. In terms of assembly, homodimer.

Its subcellular location is the cytoplasm. The enzyme catalyses AMP + diphosphate = 5-phospho-alpha-D-ribose 1-diphosphate + adenine. The protein operates within purine metabolism; AMP biosynthesis via salvage pathway; AMP from adenine: step 1/1. Functionally, catalyzes a salvage reaction resulting in the formation of AMP, that is energically less costly than de novo synthesis. The polypeptide is Adenine phosphoribosyltransferase (Bacillus anthracis (strain A0248)).